Consider the following 713-residue polypeptide: Nuclear poly(A) polymerase 1 (713 aa).

Residues 91-93 (FGS), 103-106 (ADID), Asp-159, Tyr-229, and 238-239 (GI) each bind ATP. Residues Asp-104, Asp-106, and Asp-159 each contribute to the Mg(2+) site. Positions 480-555 (FVFPGGVRPS…TLTDQPRNSK (76 aa)) are disordered. Low complexity predominate over residues 507–526 (SSTSSAPAATTTTTEMSSES).

The protein belongs to the poly(A) polymerase family. As to quaternary structure, monomer. Forms a complex with cleavage and polyadenylation specificity factor (CPSF) subunit PAPS4. Mg(2+) is required as a cofactor. The cofactor is Mn(2+). Expressed in stems, cotyledons, hypocotyls, radicle, leaves, and, to a lower extent, in roots (including primary and secondary roots as well as root tips) and flowers. In radicle, roots and leaves, mainly present in vascular tissues.

It is found in the nucleus. It carries out the reaction RNA(n) + ATP = RNA(n)-3'-adenine ribonucleotide + diphosphate. In terms of biological role, essential protein. Polymerase that creates the 3'-poly(A) tail of mRNA's. Also required for the endoribonucleolytic cleavage reaction at some polyadenylation sites. May acquire specificity through interaction with a cleavage and polyadenylation specificity factor (CPSF) at its C-terminus. The sequence is that of Nuclear poly(A) polymerase 1 from Arabidopsis thaliana (Mouse-ear cress).